The primary structure comprises 143 residues: Nucleoside diphosphate kinase (143 aa).

K11, F59, R87, T93, R104, and N114 together coordinate ATP. The active-site Pros-phosphohistidine intermediate is the H117.

The protein belongs to the NDK family. In terms of assembly, homotetramer. Requires Mg(2+) as cofactor.

Its subcellular location is the cytoplasm. It carries out the reaction a 2'-deoxyribonucleoside 5'-diphosphate + ATP = a 2'-deoxyribonucleoside 5'-triphosphate + ADP. The enzyme catalyses a ribonucleoside 5'-diphosphate + ATP = a ribonucleoside 5'-triphosphate + ADP. Its function is as follows. Major role in the synthesis of nucleoside triphosphates other than ATP. The ATP gamma phosphate is transferred to the NDP beta phosphate via a ping-pong mechanism, using a phosphorylated active-site intermediate. This is Nucleoside diphosphate kinase from Shewanella amazonensis (strain ATCC BAA-1098 / SB2B).